A 462-amino-acid chain; its full sequence is MASNSSSCPTPGGGHLNGYPVPPYAFFFPPMLGGLSPPGALTSLQHQLPVSGYSTPSPATIETQSSSSEEIVPSPPSPPPLPRIYKPCFVCQDKSSGYHYGVSACEGCKGFFRRSIQKNMVYTCHRDKNCIINKVTRNRCQYCRLQKCFDVGMSKESVRNDRNKKKKEAPKPECSESYTLTPEVGELIEKVRKAHQETFPALCQLGKYTTNNSSEQRVSLDIDLWDKFSELSTKCIIKTVEFAKQLPGFTTLTIADQITLLKAACLDILILRICTRYTPEQDTMTFSDGLTLNRTQMHNAGFGPLTDLVFAFANQLLPLEMDDAETGLLSAICLICGDRQDLEQPDKVDMLQEPLLEALKVYVRKRRPSRPHMFPKMLMKITDLRSISAKGAERVITLKMEIPGSMPPLIQEMLENSEGLDTLSGQSGGGTRDGGGLAPPPGSCSPSLSPSSHRSSPATQSP.

The tract at residues 1-87 is modulating; it reads MASNSSSCPT…PPPLPRIYKP (87 aa). Positions 52–64 are enriched in polar residues; it reads GYSTPSPATIETQ. Residues 52–77 form a disordered region; that stretch reads GYSTPSPATIETQSSSSEEIVPSPPS. S77 is modified (phosphoserine; by CDK7). NR C4-type zinc fingers lie at residues 88–108 and 124–148; these read CFVC…CEGC and CHRD…LQKC. The segment at residues 88–153 is a DNA-binding region (nuclear receptor); that stretch reads CFVCQDKSSG…RLQKCFDVGM (66 aa). Residue S96 is modified to Phosphoserine; by PKB/AKT1. The interval 154 to 182 is hinge; it reads SKESVRNDRNKKKKEAPKPECSESYTLTP. Glycyl lysine isopeptide (Lys-Gly) (interchain with G-Cter in SUMO) cross-links involve residues K166 and K171. The NR LBD domain occupies 183 to 417; that stretch reads EVGELIEKVR…PLIQEMLENS (235 aa). S219 is subject to Phosphoserine; by PKA. C235 is an all-trans-retinoate binding site. Positions 254–258 match the UBR5-degron motif; the sequence is IADQI. S287 is a binding site for all-trans-retinoate. An N6,N6,N6-trimethyllysine modification is found at K347. A Phosphoserine; by PKA and RPS6KA5 modification is found at S369. K399 participates in a covalent cross-link: Glycyl lysine isopeptide (Lys-Gly) (interchain with G-Cter in SUMO). Positions 404-419 are required for binding corepressor NCOR1; the sequence is GSMPPLIQEMLENSEG. Residues 408–416 carry the 9aaTAD motif; it reads PLIQEMLEN. The interval 420–462 is disordered; the sequence is LDTLSGQSGGGTRDGGGLAPPPGSCSPSLSPSSHRSSPATQSP. The span at 426 to 437 shows a compositional bias: gly residues; that stretch reads QSGGGTRDGGGL. The span at 444–462 shows a compositional bias: low complexity; the sequence is CSPSLSPSSHRSSPATQSP.

The protein belongs to the nuclear hormone receptor family. NR1 subfamily. As to quaternary structure, heterodimer; with RXRA. Binds DNA preferentially as a heterodimer. RXRA serves as enhancer to induce RARA binding to RARE. Interacts with RXRG. Interacts with NCOA3 and NCOA6 coactivators, leading to a strong increase of transcription of target genes. Interacts with NCOA7; the interaction requires ligand-binding. Interacts (via the ligand-binding domain) with PRAME; interaction is direct and ligand (retinoic acid)-dependent. Interacts with PRKAR1A; the interaction negatively regulates RARA transcriptional activity. Interacts with NCOR1; the interaction occurs in the absence of ligand and represses transcriptional activity. Interacts with NCOR2. Interacts with PRMT2. Interacts with LRIF1. Interacts with ASXL1 and NCOA1. Interacts with ACTN4. Interacts with CDK7; the interaction is enhanced by interaction with GTF2H3. Interacts with GTF2H3; the interaction requires prior phosphorylation on Ser-369 which then enhances interaction with CDK7. In a complex with HDAC3, HDAC5 and HDAC7; the HDACs serve as corepressors of RARA, causing its deacetylation and inhibition of RARE DNA element binding; association with HDAC3, HDAC5 and HDAC7 is increased upon oscillatory shear stress. In the absence of hormonal ligand, interacts with TACC1. Phosphorylated on serine and threonine residues. Phosphorylation does not change during cell cycle. Phosphorylation on Ser-77 is crucial for the N-terminal AF1 transcriptional activity. Under stress conditions, MAPK8 enhances phosphorylation on Thr-181, Ser-445 and Ser-461 leading to RARA ubiquitination and degradation. Phosphorylation by AKT1 inhibits the transactivation activity. On retinoic acid stimulation, phosphorylation on Ser-369 by RPS6KA5 promotes interaction with GTF2H3 and the CDK7-mediated phosphorylation of Ser-77. Post-translationally, ubiquitinated by UBR5, leading to its degradation: UBR5 specifically recognizes and binds ligand-bound RARA when it is not associated with coactivators (NCOAs). In presence of NCOAs, the UBR5-degron is not accessible, preventing its ubiquitination and degradation. In terms of processing, sumoylated with SUMO2, mainly on Lys-399 which is also required for SENP6 binding. On all-trans retinoic acid (ATRA) binding, a conformational change may occur that allows sumoylation on two additional site, Lys-166 and Lys-171. Probably desumoylated by SENP6. Sumoylation levels determine nuclear localization and regulate ATRA-mediated transcriptional activity. Acetylated; acetylation is increased upon pulsatile shear stress and decreased upon oscillatory shear stress. Expressed in Sertoli cells and germ cells.

It localises to the nucleus. It is found in the cytoplasm. Receptor for retinoic acid. Retinoic acid receptors bind as heterodimers to their target response elements in response to their ligands, all-trans or 9-cis retinoic acid, and regulate gene expression in various biological processes. The RXR/RAR heterodimers bind to the retinoic acid response elements (RARE) composed of tandem 5'-AGGTCA-3' sites known as DR1-DR5. In the absence of ligand, the RXR-RAR heterodimers associate with a multiprotein complex containing transcription corepressors that induce histone deacetylation, chromatin condensation and transcriptional suppression. On ligand binding, the corepressors dissociate from the receptors and associate with the coactivators leading to transcriptional activation. Formation of heterocomplex with histone deacetylases might lead to inhibition of RARE DNA element binding and to transcriptional repression. Transcriptional activation and RARE DNA element binding might be supported by the transcription factor KLF2. RARA plays an essential role in the regulation of retinoic acid-induced germ cell development during spermatogenesis. Has a role in the survival of early spermatocytes at the beginning prophase of meiosis. In Sertoli cells, may promote the survival and development of early meiotic prophase spermatocytes. In concert with RARG, required for skeletal growth, matrix homeostasis and growth plate function. Together with RXRA, positively regulates microRNA-10a expression, thereby inhibiting the GATA6/VCAM1 signaling response to pulsatile shear stress in vascular endothelial cells. In association with HDAC3, HDAC5 and HDAC7 corepressors, plays a role in the repression of microRNA-10a and thereby promotes the inflammatory response. This Mus musculus (Mouse) protein is Retinoic acid receptor alpha (Rara).